The chain runs to 662 residues: Threonine--tRNA ligase (662 aa).

The 64-residue stretch at 1–64 folds into the TGS domain; sequence MSQSVSLTFP…ADGKIEIITR (64 aa). The interval 245-547 is catalytic; it reads DHRRLGREMD…LIENFAGHMP (303 aa). Positions 341, 392, and 524 each coordinate Zn(2+).

It belongs to the class-II aminoacyl-tRNA synthetase family. As to quaternary structure, homodimer. The cofactor is Zn(2+).

Its subcellular location is the cytoplasm. It catalyses the reaction tRNA(Thr) + L-threonine + ATP = L-threonyl-tRNA(Thr) + AMP + diphosphate + H(+). Catalyzes the attachment of threonine to tRNA(Thr) in a two-step reaction: L-threonine is first activated by ATP to form Thr-AMP and then transferred to the acceptor end of tRNA(Thr). Also edits incorrectly charged L-seryl-tRNA(Thr). This is Threonine--tRNA ligase from Rhizobium rhizogenes (strain K84 / ATCC BAA-868) (Agrobacterium radiobacter).